Consider the following 184-residue polypeptide: Gremlin-1 (184 aa).

The N-terminal stretch at 1 to 24 (MNRTAYTVGALLLLLGTLLPTAEG) is a signal peptide. The interval 23-77 (EGKKKGSQGAIPPPDKAQHNDSEQTQSPPQPGSRTRGRGQGRGTAMPGEEVLESS) is disordered. A glycan (N-linked (GlcNAc...) asparagine) is linked at Asn42. Cystine bridges form between Cys94/Cys144, Cys108/Cys158, Cys118/Cys176, and Cys122/Cys178. The region spanning 94-184 (CKTQPLKQTI…QCRCISIDLD (91 aa)) is the CTCK domain.

The protein belongs to the DAN family. As to quaternary structure, homodimer; can also form homooligomers. Interacts with BMP2; can form higher oligomers with BMP2. Interacts with SLIT1 and SLIT2 in a glycosylation-dependent manner. In terms of tissue distribution, highly expressed in spleen and to a lesser extent in lung, skeletal muscle and kidney. Expressed only in non-transformed cells or primary fibroblasts in culture but not in established transformed or tumor derived cell lines. Broadly expressed in limb bud mesenchyme but restricted to the distal limb bud mesenchyme and concentrated posteriorly. Expressed in ovary especially in granulosa cells of follicles of type 4.

It localises to the secreted. In terms of biological role, cytokine that may play an important role during carcinogenesis and metanephric kidney organogenesis, as BMP a antagonist required for early limb outgrowth and patterning in maintaining the FGF4-SHH feedback loop. Down-regulates the BMP4 signaling in a dose-dependent manner. Antagonist of BMP2; inhibits BMP2-mediated differentiation of osteoblasts (in vitro). Acts as inhibitor of monocyte chemotaxis. The sequence is that of Gremlin-1 (Grem1) from Mus musculus (Mouse).